Here is a 95-residue protein sequence, read N- to C-terminus: Large ribosomal subunit protein uL23 (95 aa).

It belongs to the universal ribosomal protein uL23 family. Part of the 50S ribosomal subunit. Contacts protein L29, and trigger factor when it is bound to the ribosome.

Functionally, one of the early assembly proteins it binds 23S rRNA. One of the proteins that surrounds the polypeptide exit tunnel on the outside of the ribosome. Forms the main docking site for trigger factor binding to the ribosome. This Deinococcus deserti (strain DSM 17065 / CIP 109153 / LMG 22923 / VCD115) protein is Large ribosomal subunit protein uL23.